Here is a 149-residue protein sequence, read N- to C-terminus: D-aminoacyl-tRNA deacylase (149 aa).

The Gly-cisPro motif, important for rejection of L-amino acids motif lies at 139–140; sequence GP.

Belongs to the DTD family. As to quaternary structure, homodimer.

The protein resides in the cytoplasm. It catalyses the reaction glycyl-tRNA(Ala) + H2O = tRNA(Ala) + glycine + H(+). It carries out the reaction a D-aminoacyl-tRNA + H2O = a tRNA + a D-alpha-amino acid + H(+). An aminoacyl-tRNA editing enzyme that deacylates mischarged D-aminoacyl-tRNAs. Also deacylates mischarged glycyl-tRNA(Ala), protecting cells against glycine mischarging by AlaRS. Acts via tRNA-based rather than protein-based catalysis; rejects L-amino acids rather than detecting D-amino acids in the active site. By recycling D-aminoacyl-tRNA to D-amino acids and free tRNA molecules, this enzyme counteracts the toxicity associated with the formation of D-aminoacyl-tRNA entities in vivo and helps enforce protein L-homochirality. The chain is D-aminoacyl-tRNA deacylase (dtd1) from Schizosaccharomyces pombe (strain 972 / ATCC 24843) (Fission yeast).